The following is a 201-amino-acid chain: MRKINDYYAKKAKKDNYPARSIYKLEEAQKKYDIISRGDSILDLGCFPGSWSIYASELAGPKGIVVGVDLQQAVGGGRADAAPIHWICEDIREPAMLEAVRRIRPSFRVLISDMAPKTTGNRWTDAQQSLNLCYQTLEIAEQVLLNKGNYICKVFQGGDFPDFVDAVKKRFESARVIKPQSSRIESREVFVLGLNYRKPQK.

Residues G49, W51, D69, D90, and D113 each contribute to the S-adenosyl-L-methionine site. K153 serves as the catalytic Proton acceptor.

It belongs to the class I-like SAM-binding methyltransferase superfamily. RNA methyltransferase RlmE family.

The protein resides in the cytoplasm. It catalyses the reaction uridine(2552) in 23S rRNA + S-adenosyl-L-methionine = 2'-O-methyluridine(2552) in 23S rRNA + S-adenosyl-L-homocysteine + H(+). Specifically methylates the uridine in position 2552 of 23S rRNA at the 2'-O position of the ribose in the fully assembled 50S ribosomal subunit. The polypeptide is Ribosomal RNA large subunit methyltransferase E (Desulfotalea psychrophila (strain LSv54 / DSM 12343)).